The sequence spans 447 residues: Hemopexin (447 aa).

The N-terminal stretch at 1–18 (MRLIQALSLCLALSLSLA) is a signal peptide. Positions 20–44 (PPQHKEDHSHKGKPGGEGHKHELHH) are disordered. Over residues 22 to 44 (QHKEDHSHKGKPGGEGHKHELHH) the composition is skewed to basic and acidic residues. Hemopexin repeat units follow at residues 53–93 (GIEF…FPEL), 99–151 (LGHV…FPGI), 152–197 (PDHL…FKSM), 198–243 (PNCT…FMRC), 262–304 (RVHL…FKEL), 305–351 (HSEV…VLGI), 352–395 (EGPV…TITQ), and 396–441 (FKRI…VSQQ). N87 carries N-linked (GlcNAc...) asparagine glycosylation. Residues N168 and N199 are each glycosylated (N-linked (GlcNAc...) asparagine). H293 contributes to the heme binding site.

The protein belongs to the hemopexin family.

It localises to the secreted. Functionally, binds heme and transports it to the liver for breakdown and iron recovery, after which the free hemopexin returns to the circulation. This chain is Hemopexin, found in Danio rerio (Zebrafish).